Consider the following 428-residue polypeptide: CinA-like protein (428 aa).

Belongs to the CinA family.

The sequence is that of CinA-like protein from Chlorobium phaeovibrioides (strain DSM 265 / 1930) (Prosthecochloris vibrioformis (strain DSM 265)).